Consider the following 208-residue polypeptide: Small ribosomal subunit protein uS4 (208 aa).

The tract at residues 31–51 (SALDKRAYGPGQHGQRRAKTS) is disordered. Residues 98-156 (RRLDNVVYRMGFATTRSSARQLVTHGHVLVDGKRLDIPSYFVRSGQKIEIKEKTKSNPQ) form the S4 RNA-binding domain.

This sequence belongs to the universal ribosomal protein uS4 family. As to quaternary structure, part of the 30S ribosomal subunit. Contacts protein S5. The interaction surface between S4 and S5 is involved in control of translational fidelity.

Functionally, one of the primary rRNA binding proteins, it binds directly to 16S rRNA where it nucleates assembly of the body of the 30S subunit. In terms of biological role, with S5 and S12 plays an important role in translational accuracy. This chain is Small ribosomal subunit protein uS4, found in Helicobacter pylori (strain HPAG1).